The sequence spans 393 residues: Venom metalloproteinase BumaMPs1 (393 aa).

The signal sequence occupies residues 1 to 15; that stretch reads MFVHLLVLLFAAVEA. Residue N158 is glycosylated (N-linked (GlcNAc...) asparagine). The Peptidase M12B domain occupies 167 to 377; that stretch reads KCVKIEYVFV…RVEELITRRK (211 aa). Position 323 (H323) interacts with Zn(2+). E324 is an active-site residue. Zn(2+)-binding residues include H327 and H333. The disintegrin-like domain stretch occupies residues 378–393; the sequence is INHCIVETCDGKRKRN.

The protein belongs to the venom metalloproteinase (M12B) family. The cofactor is Zn(2+). In terms of processing, contains several disulfide bonds. Expressed by the venom gland.

The protein resides in the secreted. Functionally, metalloprotease. The sequence is that of Venom metalloproteinase BumaMPs1 from Olivierus martensii (Manchurian scorpion).